Reading from the N-terminus, the 73-residue chain is UPF0435 protein Lm4b_01721 (73 aa).

The protein belongs to the UPF0435 family.

The protein is UPF0435 protein Lm4b_01721 of Listeria monocytogenes serotype 4b (strain CLIP80459).